The sequence spans 326 residues: DNA-directed RNA polymerase subunit alpha (326 aa).

The interval 1–231 (MQTALLKPKI…DQLSVFAALE (231 aa)) is alpha N-terminal domain (alpha-NTD). The tract at residues 247-326 (IDPILLRPVD…ENWPPAGLDK (80 aa)) is alpha C-terminal domain (alpha-CTD).

The protein belongs to the RNA polymerase alpha chain family. In terms of assembly, homodimer. The RNAP catalytic core consists of 2 alpha, 1 beta, 1 beta' and 1 omega subunit. When a sigma factor is associated with the core the holoenzyme is formed, which can initiate transcription.

The catalysed reaction is RNA(n) + a ribonucleoside 5'-triphosphate = RNA(n+1) + diphosphate. In terms of biological role, DNA-dependent RNA polymerase catalyzes the transcription of DNA into RNA using the four ribonucleoside triphosphates as substrates. This is DNA-directed RNA polymerase subunit alpha from Cupriavidus pinatubonensis (strain JMP 134 / LMG 1197) (Cupriavidus necator (strain JMP 134)).